The primary structure comprises 145 residues: Eukaryotic translation initiation factor 1A (145 aa).

Basic residues predominate over residues Met-1–Gly-15. The interval Met-1–Glu-25 is disordered. Over residues Lys-16–Glu-25 the composition is skewed to basic and acidic residues. One can recognise an S1-like domain in the interval Asp-22–Met-96.

Belongs to the eIF-1A family.

Its function is as follows. Seems to be required for maximal rate of protein biosynthesis. Enhances ribosome dissociation into subunits and stabilizes the binding of the initiator Met-tRNA(I) to 40 S ribosomal subunits. This chain is Eukaryotic translation initiation factor 1A, found in Onobrychis viciifolia (Common sainfoin).